The primary structure comprises 579 residues: uncharacterized protein (579 aa).

This is an uncharacterized protein from Klebsiella pneumoniae.